Reading from the N-terminus, the 416-residue chain is Putative competence-damage inducible protein (416 aa).

It belongs to the CinA family.

This chain is Putative competence-damage inducible protein, found in Bacillus velezensis (strain DSM 23117 / BGSC 10A6 / LMG 26770 / FZB42) (Bacillus amyloliquefaciens subsp. plantarum).